Reading from the N-terminus, the 214-residue chain is N-(5'-phosphoribosyl)anthranilate isomerase (214 aa).

The protein belongs to the TrpF family.

The catalysed reaction is N-(5-phospho-beta-D-ribosyl)anthranilate = 1-(2-carboxyphenylamino)-1-deoxy-D-ribulose 5-phosphate. It participates in amino-acid biosynthesis; L-tryptophan biosynthesis; L-tryptophan from chorismate: step 3/5. The polypeptide is N-(5'-phosphoribosyl)anthranilate isomerase (Rhodospirillum centenum (strain ATCC 51521 / SW)).